Here is a 173-residue protein sequence, read N- to C-terminus: Protein GrpE (173 aa).

Residues 1–20 show a composition bias toward basic and acidic residues; that stretch reads MQDEFKTDTPRTEAGSEKET. The disordered stretch occupies residues 1–23; sequence MQDEFKTDTPRTEAGSEKETMPS.

This sequence belongs to the GrpE family. As to quaternary structure, homodimer.

Its subcellular location is the cytoplasm. In terms of biological role, participates actively in the response to hyperosmotic and heat shock by preventing the aggregation of stress-denatured proteins, in association with DnaK and GrpE. It is the nucleotide exchange factor for DnaK and may function as a thermosensor. Unfolded proteins bind initially to DnaJ; upon interaction with the DnaJ-bound protein, DnaK hydrolyzes its bound ATP, resulting in the formation of a stable complex. GrpE releases ADP from DnaK; ATP binding to DnaK triggers the release of the substrate protein, thus completing the reaction cycle. Several rounds of ATP-dependent interactions between DnaJ, DnaK and GrpE are required for fully efficient folding. In Thiobacillus denitrificans (strain ATCC 25259 / T1), this protein is Protein GrpE.